A 704-amino-acid chain; its full sequence is Glycine--tRNA ligase beta subunit (704 aa).

Belongs to the class-II aminoacyl-tRNA synthetase family. As to quaternary structure, tetramer of two alpha and two beta subunits.

It is found in the cytoplasm. It carries out the reaction tRNA(Gly) + glycine + ATP = glycyl-tRNA(Gly) + AMP + diphosphate. This Delftia acidovorans (strain DSM 14801 / SPH-1) protein is Glycine--tRNA ligase beta subunit.